Here is a 248-residue protein sequence, read N- to C-terminus: Ribonuclease PH (248 aa).

Residues arginine 86 and 124–126 each bind phosphate; that span reads GTR.

It belongs to the RNase PH family. As to quaternary structure, homohexameric ring arranged as a trimer of dimers.

It carries out the reaction tRNA(n+1) + phosphate = tRNA(n) + a ribonucleoside 5'-diphosphate. In terms of biological role, phosphorolytic 3'-5' exoribonuclease that plays an important role in tRNA 3'-end maturation. Removes nucleotide residues following the 3'-CCA terminus of tRNAs; can also add nucleotides to the ends of RNA molecules by using nucleoside diphosphates as substrates, but this may not be physiologically important. Probably plays a role in initiation of 16S rRNA degradation (leading to ribosome degradation) during starvation. The chain is Ribonuclease PH from Listeria monocytogenes serotype 4b (strain CLIP80459).